Here is a 1233-residue protein sequence, read N- to C-terminus: Integrator complex subunit 4 homolog (1233 aa).

2 HEAT repeats span residues 236-273 (SLINQIIEYIEPLLHSTSPLVRRETIVLLGSIVKNLDK) and 275-310 (SEEIQILLLNYLKDTDFRVREASLKSLSVIFQRGAS). The disordered stretch occupies residues 426–473 (RLQQKQQQQQQQQQQQQQQPPQQQPSQQPNQQPNQQQTNVSGTHIATP). The span at 428-462 (QQKQQQQQQQQQQQQQQPPQQQPSQQPNQQPNQQQ) shows a compositional bias: low complexity. 3 HEAT repeats span residues 487 to 524 (ILESGVIGAFIQGLEDEFYEVRSSAIDSMCELSVRNDE), 525 to 561 (FAQKNIDFLVDIFNDEIESVRINSINSLRKIGNNVVI), and 563 to 597 (EEQLHIILANLESSSKEERQSLHRLLTSIHLSNYS). Low complexity predominate over residues 767–792 (NNNTNNNNNNNNNNNNNNNNNNNNNN). 2 disordered regions span residues 767 to 796 (NNNTNNNNNNNNNNNNNNNNNNNNNNDEND) and 993 to 1057 (DKKL…TTTT). Positions 1000 to 1013 (EENEENEENENNEN) are enriched in acidic residues. Residues 1014–1030 (ENEKENGKNKEKEKNEN) show a composition bias toward basic and acidic residues. A compositionally biased stretch (low complexity) spans 1046-1057 (KTTSELIKTTTT).

Belongs to the Integrator subunit 4 family. Component of the Integrator complex. The core complex associates with protein phosphatase 2A subunits, to form the Integrator-PP2A (INTAC) complex.

Its subcellular location is the nucleus. The protein resides in the cytoplasm. Functionally, component of the integrator complex, a multiprotein complex that terminates RNA polymerase II (Pol II) transcription in the promoter-proximal region of genes. The integrator complex provides a quality checkpoint during transcription elongation by driving premature transcription termination of transcripts that are unfavorably configured for transcriptional elongation: the complex terminates transcription by (1) catalyzing dephosphorylation of the C-terminal domain (CTD) of Pol II subunit polr2a, (2) degrading the exiting nascent RNA transcript via endonuclease activity and (3) promoting the release of Pol II from bound DNA. The integrator complex is also involved in terminating the synthesis of non-coding Pol II transcripts, such as enhancer RNAs (eRNAs), small nuclear RNAs (snRNAs), telomerase RNAs and long non-coding RNAs (lncRNAs). The sequence is that of Integrator complex subunit 4 homolog (ints4) from Dictyostelium discoideum (Social amoeba).